A 638-amino-acid polypeptide reads, in one-letter code: 1-deoxy-D-xylulose-5-phosphate synthase (638 aa).

Residues histidine 79 and 120–122 (GHS) contribute to the thiamine diphosphate site. Mg(2+) is bound at residue aspartate 151. Residues 152-153 (GA), asparagine 182, tyrosine 291, and glutamate 373 contribute to the thiamine diphosphate site. Asparagine 182 provides a ligand contact to Mg(2+).

This sequence belongs to the transketolase family. DXPS subfamily. In terms of assembly, homodimer. The cofactor is Mg(2+). Requires thiamine diphosphate as cofactor.

It carries out the reaction D-glyceraldehyde 3-phosphate + pyruvate + H(+) = 1-deoxy-D-xylulose 5-phosphate + CO2. It participates in metabolic intermediate biosynthesis; 1-deoxy-D-xylulose 5-phosphate biosynthesis; 1-deoxy-D-xylulose 5-phosphate from D-glyceraldehyde 3-phosphate and pyruvate: step 1/1. Catalyzes the acyloin condensation reaction between C atoms 2 and 3 of pyruvate and glyceraldehyde 3-phosphate to yield 1-deoxy-D-xylulose-5-phosphate (DXP). The sequence is that of 1-deoxy-D-xylulose-5-phosphate synthase from Xanthomonas campestris pv. campestris (strain 8004).